The sequence spans 422 residues: F-box/FBD/LRR-repeat protein At5g56420 (422 aa).

The F-box domain occupies 5 to 54; sequence RDRLSQLPDDFLLQILSWLPTKDVLVTSLLSKRWRFLWTLVPRLNYDLRL. 7 LRR repeats span residues 59 to 85, 136 to 163, 164 to 189, 193 to 212, 214 to 238, 279 to 304, and 305 to 330; these read CPRFSQFVDRSLLLHKAPTLESLNIKI, VLKLENITLEDASCYVCFQSLKTLHLLD, VKYLDDQSLPRIISSCSSLEDLVVQR, DNVKVVTVTAPSLKTLSLHK, SQAFEGDDDGFLIDTPKLKRVDIED, LCLITSDAAYPAGTIFSQLVHLELCT, and CAPRWWDLLTRLIEDSPKLRVLKLRQ. The region spanning 342–391 is the FBD domain; sequence SWKQPALPKCLLFHLETFKWELYEGSQKQKEVATFILKHAIRLKTAIISP.

The protein is F-box/FBD/LRR-repeat protein At5g56420 of Arabidopsis thaliana (Mouse-ear cress).